Reading from the N-terminus, the 345-residue chain is Annexin A9 (345 aa).

Annexin repeat units lie at residues 41–112, 113–184, 197–266, and 270–341; these read FSVD…ALLQ, PTAQ…ALAK, NLAE…GLAS, and NTPL…ALCR.

The protein belongs to the annexin family. In terms of assembly, homodimer. In terms of tissue distribution, expressed in the stratified squamous skin epithelium, but not in epithelia of other types (at protein level).

Its function is as follows. Low affinity receptor for acetylcholine known to be targeted by disease-causing pemphigus vulgaris antibodies in keratinocytes. In Homo sapiens (Human), this protein is Annexin A9 (ANXA9).